Reading from the N-terminus, the 247-residue chain is Triosephosphate isomerase (247 aa).

9–11 (NWK) serves as a coordination point for substrate. His-94 functions as the Electrophile in the catalytic mechanism. The Proton acceptor role is filled by Glu-166. Substrate contacts are provided by residues Gly-172, Ser-211, and 232–233 (GG).

Belongs to the triosephosphate isomerase family. As to quaternary structure, homodimer.

Its subcellular location is the cytoplasm. The catalysed reaction is D-glyceraldehyde 3-phosphate = dihydroxyacetone phosphate. It functions in the pathway carbohydrate biosynthesis; gluconeogenesis. The protein operates within carbohydrate degradation; glycolysis; D-glyceraldehyde 3-phosphate from glycerone phosphate: step 1/1. Functionally, involved in the gluconeogenesis. Catalyzes stereospecifically the conversion of dihydroxyacetone phosphate (DHAP) to D-glyceraldehyde-3-phosphate (G3P). The protein is Triosephosphate isomerase of Cupriavidus taiwanensis (strain DSM 17343 / BCRC 17206 / CCUG 44338 / CIP 107171 / LMG 19424 / R1) (Ralstonia taiwanensis (strain LMG 19424)).